The primary structure comprises 144 residues: Maximins 8/H7 (144 aa).

A signal peptide spans 1–18 (MKFKYIVAVSFLIASAYA). A propeptide spanning residues 19–43 (RSEENDEQSLSQRDVLEEESLREIR) is cleaved from the precursor. Asn70 is modified (asparagine amide). The propeptide occupies 74-123 (TAEDHEVMKRLEAVMRDLDSLDYPEEASERETRGFNQEEIANLFTKKEKR). Leu143 bears the Leucine amide mark.

It belongs to the bombinin family. As to expression, expressed by the skin glands.

It localises to the secreted. Functionally, maximin-8 shows antimicrobial activity against bacteria and against the fungus C.albicans. It has little hemolytic activity. Maximin-H7 shows antimicrobial activity against bacteria and against the fungus C.albicans. Shows strong hemolytic activity. This is Maximins 8/H7 from Bombina maxima (Giant fire-bellied toad).